The sequence spans 220 residues: Adenylate kinase (220 aa).

ATP is bound at residue 12 to 17; the sequence is GAGKGT. The segment at 32 to 62 is NMP; the sequence is STGDIFRDIVKKENDELGKKIKEIMEKGELV. AMP contacts are provided by residues threonine 33, arginine 38, 60–62, 88–91, and glutamine 95; these read ELV and GYPR. The segment at 129–166 is LID; that stretch reads SRRICPKCGRIYNMISLPPKEDELCDDCKVKLVQRDDD. Arginine 130 provides a ligand contact to ATP. Zn(2+)-binding residues include cysteine 133 and cysteine 136. 139-140 is a binding site for ATP; it reads IY. Zn(2+) contacts are provided by cysteine 153 and cysteine 156. Positions 163 and 174 each coordinate AMP. Residue isoleucine 202 coordinates ATP.

The protein belongs to the adenylate kinase family. Monomer.

The protein resides in the cytoplasm. It carries out the reaction AMP + ATP = 2 ADP. It participates in purine metabolism; AMP biosynthesis via salvage pathway; AMP from ADP: step 1/1. In terms of biological role, catalyzes the reversible transfer of the terminal phosphate group between ATP and AMP. Plays an important role in cellular energy homeostasis and in adenine nucleotide metabolism. The chain is Adenylate kinase from Thermotoga neapolitana.